Consider the following 101-residue polypeptide: MIKSELIDQLAEANPHLYHRDVERVVNTILDGITDALARGERVELRGFGAFSVRHRPARVGRNPRTGESVAVKEKHVPFFKTGKELRERVDASRESNPEIA.

Belongs to the bacterial histone-like protein family. As to quaternary structure, heterodimer of an alpha and a beta chain.

Functionally, this protein is one of the two subunits of integration host factor, a specific DNA-binding protein that functions in genetic recombination as well as in transcriptional and translational control. This chain is Integration host factor subunit beta, found in Maricaulis maris (strain MCS10) (Caulobacter maris).